Consider the following 367-residue polypeptide: Embryonic developmental protein tofu-6 (367 aa).

Residues 13–92 (AGFHIRNIPK…FTLKVTDHKN (80 aa)) form the RRM domain. Positions 298-345 (KSILADRLQRKGVCEYLPRSQQPHYAYSRETLLQHNNSGVTAQISNDA) are required for ife-3 interaction.

In terms of assembly, component of the pid-1 variant of the PETISCO complex (also called the pid-3, erh-2, tofu-6, and ife-3 small RNA complex) containing at least pid-1, tofu-6, ife-3, pid-3, and erh-2, which is required for the biogenesis of 21 nucleotide PIWI-interacting RNAs (piRNAs) that possess a uracil residue at the 5'-end (also called 21U-RNAs). Within the pid-1 variant of the PETISCO complex interacts with pid-1. Component of the tost-1 variant of the PETISCO complex (also called the pid-3, erh-2, tofu-6, and ife-3 small RNA complex) containing at least tost-1, tofu-6, ife-3, pid-3, and erh-2, which plays an essential role in embryogenesis. Within the tost-1 variant of the PETISCO complex interacts with tost-1. Within the pid-1 and tost-1 variants of the PETISCO complexes interacts (via C-terminus) with ife-3. Within the pid-1 and tost-1 variants of the PETISCO complexes interacts (via the RRM domain) with pid-3. Within the pid-1 and tost-1 variants of the PETISCO complexes interacts (via the RRM domain) with erh-2. In contrast to the pid-1 variant of the PETISCO complex, the tost-1 variant of the PETISCO complex plays a minor role in the biogenesis of 21U-RNAs. Interacts (via residues 120-314) with the PUCH complex subunit tofu-1 (via residues 82-172); the interaction between the PETISCO and PUCH complex members enhances piRNA production in vivo. In terms of tissue distribution, expression is restricted to the germline (at protein level).

The protein localises to the cytoplasm. It localises to the perinuclear region. Its subcellular location is the nucleus. In terms of biological role, component of the pid-1 and tost-1 variants of the PETISCO complexes, which have roles in the biogenesis of a class of 21 nucleotide PIWI-interacting RNAs (piRNAs) that possess a uracil residue at the 5'-end (also called 21U-RNAs) and embryogenesis, respectively. Promotes the biogenesis of 21U-RNAs. Mediates the interaction between the PETISCO complex and the PUCH complex, the endoribonuclease complex processing the 5'-end of precursor piRNAs, thereby enhancing mature piRNA production. Required for chromosome segregation and cell division in early embryos. May have a role in DNA replication. The chain is Embryonic developmental protein tofu-6 from Caenorhabditis elegans.